The following is a 186-amino-acid chain: Elongation factor P (186 aa).

The protein belongs to the elongation factor P family.

Its subcellular location is the cytoplasm. Its pathway is protein biosynthesis; polypeptide chain elongation. Involved in peptide bond synthesis. Stimulates efficient translation and peptide-bond synthesis on native or reconstituted 70S ribosomes in vitro. Probably functions indirectly by altering the affinity of the ribosome for aminoacyl-tRNA, thus increasing their reactivity as acceptors for peptidyl transferase. This chain is Elongation factor P, found in Synechococcus sp. (strain RCC307).